The primary structure comprises 150 residues: uncharacterized protein (150 aa).

Belongs to the OsmC/Ohr family.

This is an uncharacterized protein from Bacillus subtilis (strain 168).